We begin with the raw amino-acid sequence, 269 residues long: Bis(5'-nucleosyl)-tetraphosphatase, symmetrical (269 aa).

It belongs to the Ap4A hydrolase family.

The enzyme catalyses P(1),P(4)-bis(5'-adenosyl) tetraphosphate + H2O = 2 ADP + 2 H(+). Functionally, hydrolyzes diadenosine 5',5'''-P1,P4-tetraphosphate to yield ADP. In Vibrio vulnificus (strain YJ016), this protein is Bis(5'-nucleosyl)-tetraphosphatase, symmetrical.